The primary structure comprises 404 residues: Cysteine desulfurase IscS (404 aa).

Pyridoxal 5'-phosphate-binding positions include 75–76 (AT), Asn-155, Gln-183, and 203–205 (SAH). Lys-206 bears the N6-(pyridoxal phosphate)lysine mark. Thr-243 lines the pyridoxal 5'-phosphate pocket. Residue Cys-328 is the Cysteine persulfide intermediate of the active site. Residue Cys-328 participates in [2Fe-2S] cluster binding.

The protein belongs to the class-V pyridoxal-phosphate-dependent aminotransferase family. NifS/IscS subfamily. Homodimer. Forms a heterotetramer with IscU, interacts with other sulfur acceptors. The cofactor is pyridoxal 5'-phosphate.

It localises to the cytoplasm. It carries out the reaction (sulfur carrier)-H + L-cysteine = (sulfur carrier)-SH + L-alanine. It functions in the pathway cofactor biosynthesis; iron-sulfur cluster biosynthesis. Functionally, master enzyme that delivers sulfur to a number of partners involved in Fe-S cluster assembly, tRNA modification or cofactor biosynthesis. Catalyzes the removal of elemental sulfur atoms from cysteine to produce alanine. Functions as a sulfur delivery protein for Fe-S cluster synthesis onto IscU, an Fe-S scaffold assembly protein, as well as other S acceptor proteins. This is Cysteine desulfurase IscS from Pseudomonas entomophila (strain L48).